The chain runs to 426 residues: Glutamate-1-semialdehyde 2,1-aminomutase (426 aa).

The residue at position 265 (Lys-265) is an N6-(pyridoxal phosphate)lysine.

The protein belongs to the class-III pyridoxal-phosphate-dependent aminotransferase family. HemL subfamily. In terms of assembly, homodimer. It depends on pyridoxal 5'-phosphate as a cofactor.

The protein resides in the cytoplasm. The enzyme catalyses (S)-4-amino-5-oxopentanoate = 5-aminolevulinate. It participates in porphyrin-containing compound metabolism; protoporphyrin-IX biosynthesis; 5-aminolevulinate from L-glutamyl-tRNA(Glu): step 2/2. The protein is Glutamate-1-semialdehyde 2,1-aminomutase of Sodalis glossinidius (strain morsitans).